A 176-amino-acid chain; its full sequence is Endoribonuclease YbeY (176 aa).

Residues His128, His132, and His138 each contribute to the Zn(2+) site.

The protein belongs to the endoribonuclease YbeY family. Zn(2+) serves as cofactor.

The protein localises to the cytoplasm. Its function is as follows. Single strand-specific metallo-endoribonuclease involved in late-stage 70S ribosome quality control and in maturation of the 3' terminus of the 16S rRNA. In Zymomonas mobilis subsp. mobilis (strain ATCC 31821 / ZM4 / CP4), this protein is Endoribonuclease YbeY.